We begin with the raw amino-acid sequence, 917 residues long: Hexokinase-1 (917 aa).

Methionine 1 is modified (N-acetylmethionine). Positions 1-10 (MIAAQLLAYY) are mitochondrial-binding peptide (MBP). 2 consecutive Hexokinase domains span residues 16 to 458 (DDQV…MVTA) and 464 to 906 (AEQH…LITA). ATP-binding positions include arginine 30 and 84–89 (DLGGSS). The hexokinase small subdomain 1 stretch occupies residues 73-207 (DGSEKGDFIA…DYDANIVAVV (135 aa)). 84-91 (DLGGSSFR) is a D-glucose 6-phosphate binding site. D-glucose-binding positions include serine 155, 172-173 (TK), and 208-209 (ND). Residues 208–447 (NDTVGTMMTC…SDVRFLLSES (240 aa)) are hexokinase large subdomain 1. Positions 209 and 232 each coordinate D-glucose 6-phosphate. Residues asparagine 235, glutamate 260, and 291 to 294 (QLFE) each bind D-glucose. Serine 337 carries the phosphoserine modification. An ATP-binding site is contributed by asparagine 345. Residue 413-415 (DGS) coordinates D-glucose 6-phosphate. 425 to 426 (RR) contacts ATP. D-glucose 6-phosphate-binding positions include serine 449 and 532 to 536 (DLGGT). The interval 521–655 (DGTENGDFLA…EFDLDVVAVV (135 aa)) is hexokinase small subdomain 2. 532–537 (DLGGTN) is an ATP binding site. D-glucose contacts are provided by residues 603 to 604 (SF), 620 to 621 (TK), and 656 to 657 (ND). Residues 656 to 895 (NDTVGTMMTC…CNVSFLLSED (240 aa)) form a hexokinase large subdomain 2 region. The D-glucose 6-phosphate site is built by aspartate 657 and threonine 680. Threonine 680 contributes to the ATP binding site. D-glucose-binding positions include 682-683 (SN), glutamate 708, and glutamate 742. Residues 747-748 (GM), 784-788 (TKFLS), and 863-867 (TLYKL) contribute to the ATP site. D-glucose 6-phosphate-binding positions include 861–863 (DGT) and serine 897.

It belongs to the hexokinase family. As to quaternary structure, monomer. Interacts with RABL2/RABL2A; binds preferentially to GTP-bound RABL2. Interacts with VDAC1. The HK1-VDAC1 complex interacts with ATF2. Interacts (via N-terminal spermatogenic cell-specific region) with PFKM (via C-terminus). Interacts with SMAD5.

The protein localises to the mitochondrion outer membrane. It is found in the cytoplasm. It localises to the cytosol. The catalysed reaction is a D-hexose + ATP = a D-hexose 6-phosphate + ADP + H(+). The enzyme catalyses D-fructose + ATP = D-fructose 6-phosphate + ADP + H(+). It catalyses the reaction D-glucose + ATP = D-glucose 6-phosphate + ADP + H(+). It carries out the reaction D-mannose + ATP = D-mannose 6-phosphate + ADP + H(+). The catalysed reaction is D-glucosamine + ATP = D-glucosamine 6-phosphate + ADP + H(+). Its pathway is carbohydrate metabolism; hexose metabolism. The protein operates within carbohydrate degradation; glycolysis; D-glyceraldehyde 3-phosphate and glycerone phosphate from D-glucose: step 1/4. With respect to regulation, hexokinase is an allosteric enzyme inhibited by its product D-glucose 6-phosphate. Hexokinase activity is inhibited by N-acetyl-D-glucosamine. Its function is as follows. Catalyzes the phosphorylation of various hexoses, such as D-glucose, D-glucosamine, D-fructose, D-mannose and 2-deoxy-D-glucose, to hexose 6-phosphate (D-glucose 6-phosphate, D-glucosamine 6-phosphate, D-fructose 6-phosphate, D-mannose 6-phosphate and 2-deoxy-D-glucose 6-phosphate, respectively). Does not phosphorylate N-acetyl-D-glucosamine. Mediates the initial step of glycolysis by catalyzing phosphorylation of D-glucose to D-glucose 6-phosphate. Involved in innate immunity and inflammation by acting as a pattern recognition receptor for bacterial peptidoglycan. When released in the cytosol, N-acetyl-D-glucosamine component of bacterial peptidoglycan inhibits the hexokinase activity of HK1 and causes its dissociation from mitochondrial outer membrane, thereby activating the NLRP3 inflammasome. The sequence is that of Hexokinase-1 from Pongo abelii (Sumatran orangutan).